A 265-amino-acid polypeptide reads, in one-letter code: Methylthioribulose-1-phosphate dehydratase (265 aa).

Cys-118 is a binding site for substrate. Residues His-136 and His-138 each coordinate Zn(2+). The active-site Proton donor/acceptor is the Glu-161. Zn(2+) is bound at residue His-226.

It belongs to the aldolase class II family. MtnB subfamily. The cofactor is Zn(2+).

The protein localises to the cytoplasm. The catalysed reaction is 5-(methylsulfanyl)-D-ribulose 1-phosphate = 5-methylsulfanyl-2,3-dioxopentyl phosphate + H2O. It participates in amino-acid biosynthesis; L-methionine biosynthesis via salvage pathway; L-methionine from S-methyl-5-thio-alpha-D-ribose 1-phosphate: step 2/6. Its function is as follows. Catalyzes the dehydration of methylthioribulose-1-phosphate (MTRu-1-P) into 2,3-diketo-5-methylthiopentyl-1-phosphate (DK-MTP-1-P). This chain is Methylthioribulose-1-phosphate dehydratase, found in Scheffersomyces stipitis (strain ATCC 58785 / CBS 6054 / NBRC 10063 / NRRL Y-11545) (Yeast).